The following is a 165-amino-acid chain: uncharacterized protein (165 aa).

The chain crosses the membrane as a helical span at residues 4-26; the sequence is FVIGTMIALAGLLVGGGVGSYFT.

The protein localises to the membrane. This is an uncharacterized protein from Aquifex aeolicus (strain VF5).